Here is a 444-residue protein sequence, read N- to C-terminus: 23S rRNA (uracil(1939)-C(5))-methyltransferase RlmD (444 aa).

The region spanning 5–67 (RNRLDRTPFQ…RHFDEAKTVE (63 aa)) is the TRAM domain. [4Fe-4S] cluster-binding residues include C80, C86, C89, and C168. S-adenosyl-L-methionine contacts are provided by Q276, F305, N310, E326, D353, and D374. The active-site Nucleophile is C400.

The protein belongs to the class I-like SAM-binding methyltransferase superfamily. RNA M5U methyltransferase family. RlmD subfamily.

It carries out the reaction uridine(1939) in 23S rRNA + S-adenosyl-L-methionine = 5-methyluridine(1939) in 23S rRNA + S-adenosyl-L-homocysteine + H(+). Its function is as follows. Catalyzes the formation of 5-methyl-uridine at position 1939 (m5U1939) in 23S rRNA. The polypeptide is 23S rRNA (uracil(1939)-C(5))-methyltransferase RlmD (Xanthomonas euvesicatoria pv. vesicatoria (strain 85-10) (Xanthomonas campestris pv. vesicatoria)).